Reading from the N-terminus, the 753-residue chain is Rho guanine nucleotide exchange factor gef1 (753 aa).

Disordered regions lie at residues Ser52–Arg150, Thr175–Gly194, and Ala200–Leu245. Polar residues-rich tracts occupy residues Asp94 to Ser105, Gly114 to Pro141, Thr181 to Arg191, and Ala200 to Thr220. Residues Thr230–Leu245 show a composition bias toward low complexity. Positions Lys311–Lys507 constitute a DH domain.

As to quaternary structure, interacts with cdc42.

The protein localises to the cytoplasm. Has a role in the control of cell polarity and cytokinesis. Involved in bipolar growth, via modulation of cdc42-shk1-orb6 signaling, and septum formation. Stimulates guanine nucleotide exchange of cdc42. The chain is Rho guanine nucleotide exchange factor gef1 (gef1) from Schizosaccharomyces pombe (strain 972 / ATCC 24843) (Fission yeast).